The sequence spans 675 residues: Putative L-type lectin-domain containing receptor kinase I.11 (675 aa).

The first 22 residues, Met1–Ser22, serve as a signal peptide directing secretion. The Extracellular segment spans residues Gln23–Pro292. A legume-lectin like region spans residues Ala27–Ser263. N-linked (GlcNAc...) asparagine glycans are attached at residues Asn60, Asn129, Asn186, Asn209, and Asn230. Residues Leu293–Tyr313 traverse the membrane as a helical segment. The Cytoplasmic segment spans residues Leu314–Arg675. The Protein kinase domain maps to Phe348–Leu620. Residues Leu354 to Val362 and Lys376 each bind ATP. The active-site Proton acceptor is the Asp472.

In the C-terminal section; belongs to the protein kinase superfamily. Ser/Thr protein kinase family. This sequence in the N-terminal section; belongs to the leguminous lectin family.

The protein resides in the cell membrane. It carries out the reaction L-seryl-[protein] + ATP = O-phospho-L-seryl-[protein] + ADP + H(+). It catalyses the reaction L-threonyl-[protein] + ATP = O-phospho-L-threonyl-[protein] + ADP + H(+). In Arabidopsis thaliana (Mouse-ear cress), this protein is Putative L-type lectin-domain containing receptor kinase I.11 (LECRK111).